Consider the following 343-residue polypeptide: Methionine import ATP-binding protein MetN (343 aa).

The ABC transporter domain maps to 2–241 (IKLSNITKVF…PKTPLAQKFI (240 aa)). Residue 38 to 45 (GASGAGKS) participates in ATP binding.

This sequence belongs to the ABC transporter superfamily. Methionine importer (TC 3.A.1.24) family. As to quaternary structure, the complex is composed of two ATP-binding proteins (MetN), two transmembrane proteins (MetI) and a solute-binding protein (MetQ).

It is found in the cell inner membrane. It catalyses the reaction L-methionine(out) + ATP + H2O = L-methionine(in) + ADP + phosphate + H(+). The enzyme catalyses D-methionine(out) + ATP + H2O = D-methionine(in) + ADP + phosphate + H(+). Its function is as follows. Part of the ABC transporter complex MetNIQ involved in methionine import. Responsible for energy coupling to the transport system. The polypeptide is Methionine import ATP-binding protein MetN (Escherichia coli O6:K15:H31 (strain 536 / UPEC)).